The following is a 141-amino-acid chain: Protein NrdI (141 aa).

Belongs to the NrdI family.

Probably involved in ribonucleotide reductase function. The protein is Protein NrdI of Bifidobacterium animalis subsp. lactis (strain AD011).